We begin with the raw amino-acid sequence, 216 residues long: Probable GTP-binding protein EngB (216 aa).

The region spanning 21–192 (DAPQIALAGR…WRELRALAAG (172 aa)) is the EngB-type G domain. Residues 29–36 (GRSNVGKS), 56–60 (GKTRS), 75–78 (DLPG), 142–145 (TKGD), and 170–173 (VTAS) each bind GTP. The Mg(2+) site is built by S36 and T58. The disordered stretch occupies residues 195-216 (SADDEAEDAPSDTIDAIDDVTA). A compositionally biased stretch (acidic residues) spans 196-216 (ADDEAEDAPSDTIDAIDDVTA).

It belongs to the TRAFAC class TrmE-Era-EngA-EngB-Septin-like GTPase superfamily. EngB GTPase family. It depends on Mg(2+) as a cofactor.

Functionally, necessary for normal cell division and for the maintenance of normal septation. The sequence is that of Probable GTP-binding protein EngB from Nitratidesulfovibrio vulgaris (strain DP4) (Desulfovibrio vulgaris).